Consider the following 467-residue polypeptide: Methionine aminopeptidase 2-1 (467 aa).

Residues 1–10 (MGSKSPDGHR) show a composition bias toward basic and acidic residues. Positions 1-105 (MGSKSPDGHR…TPPRVSLPSI (105 aa)) are disordered. The span at 43-55 (DGDDEDEDGDDDG) shows a compositional bias: acidic residues. Over residues 75 to 90 (KKRKRKSNKKKKKKTS) the composition is skewed to basic residues. Residue histidine 219 participates in substrate binding. Positions 240, 251, and 320 each coordinate a divalent metal cation. Histidine 328 lines the substrate pocket. The a divalent metal cation site is built by glutamate 353 and glutamate 448.

The protein belongs to the peptidase M24A family. Methionine aminopeptidase eukaryotic type 2 subfamily. Co(2+) is required as a cofactor. Requires Zn(2+) as cofactor. It depends on Mn(2+) as a cofactor. Fe(2+) serves as cofactor.

It localises to the cytoplasm. The enzyme catalyses Release of N-terminal amino acids, preferentially methionine, from peptides and arylamides.. In terms of biological role, cotranslationally removes the N-terminal methionine from nascent proteins. The N-terminal methionine is often cleaved when the second residue in the primary sequence is small and uncharged (Met-Ala-, Cys, Gly, Pro, Ser, Thr, or Val). The chain is Methionine aminopeptidase 2-1 from Arthroderma gypseum (strain ATCC MYA-4604 / CBS 118893) (Microsporum gypseum).